A 151-amino-acid polypeptide reads, in one-letter code: 3-hydroxyacyl-[acyl-carrier-protein] dehydratase FabZ (151 aa).

The active site involves His54.

The protein belongs to the thioester dehydratase family. FabZ subfamily.

It is found in the cytoplasm. The enzyme catalyses a (3R)-hydroxyacyl-[ACP] = a (2E)-enoyl-[ACP] + H2O. Involved in unsaturated fatty acids biosynthesis. Catalyzes the dehydration of short chain beta-hydroxyacyl-ACPs and long chain saturated and unsaturated beta-hydroxyacyl-ACPs. This chain is 3-hydroxyacyl-[acyl-carrier-protein] dehydratase FabZ, found in Cronobacter sakazakii (strain ATCC BAA-894) (Enterobacter sakazakii).